The chain runs to 373 residues: Inhibitor of nuclear factor kappa-B kinase-interacting protein (373 aa).

A compositionally biased stretch (basic residues) spans 1–11 (MSEVKSRKKPG). The disordered stretch occupies residues 1 to 38 (MSEVKSRKKPGPKVAAPEPEKRSDGRKNPEARGGAGWA). Over residues 18 to 30 (EPEKRSDGRKNPE) the composition is skewed to basic and acidic residues. The helical transmembrane segment at 43–59 (GLSLLSLATSLGLAWLV) threads the bilayer. Coiled-coil stretches lie at residues 64–257 (EKFA…DKLS) and 290–325 (TERK…LEGI). N-linked (GlcNAc...) asparagine glycosylation occurs at N151.

N-glycosylated at Asn-151.

It is found in the endoplasmic reticulum membrane. Target of p53/TP53 with pro-apoptotic function. This is Inhibitor of nuclear factor kappa-B kinase-interacting protein (Ikbip) from Rattus norvegicus (Rat).